The chain runs to 210 residues: Probable GTP-binding protein EngB (210 aa).

The EngB-type G domain occupies 25–199 (TGIEVAFAGR…RQKLDTWFSE (175 aa)). GTP contacts are provided by residues 33 to 40 (GRSNAGKS), 60 to 64 (GRTQL), 78 to 81 (DLPG), 145 to 148 (TKAD), and 178 to 180 (FSS). Mg(2+)-binding residues include serine 40 and threonine 62.

It belongs to the TRAFAC class TrmE-Era-EngA-EngB-Septin-like GTPase superfamily. EngB GTPase family. Mg(2+) is required as a cofactor.

Necessary for normal cell division and for the maintenance of normal septation. The sequence is that of Probable GTP-binding protein EngB from Shigella flexneri.